The chain runs to 225 residues: Peptidyl-tRNA hydrolase (225 aa).

Residue tyrosine 27 coordinates tRNA. Histidine 32 functions as the Proton acceptor in the catalytic mechanism. Residues tyrosine 78, asparagine 80, and asparagine 126 each coordinate tRNA. A disordered region spans residues 198 to 225 (FNPLDFSGPDRQDQPAPLNPAKTAPGES).

Belongs to the PTH family. Monomer.

It localises to the cytoplasm. The catalysed reaction is an N-acyl-L-alpha-aminoacyl-tRNA + H2O = an N-acyl-L-amino acid + a tRNA + H(+). Hydrolyzes ribosome-free peptidyl-tRNAs (with 1 or more amino acids incorporated), which drop off the ribosome during protein synthesis, or as a result of ribosome stalling. In terms of biological role, catalyzes the release of premature peptidyl moieties from peptidyl-tRNA molecules trapped in stalled 50S ribosomal subunits, and thus maintains levels of free tRNAs and 50S ribosomes. The sequence is that of Peptidyl-tRNA hydrolase from Synechococcus sp. (strain JA-3-3Ab) (Cyanobacteria bacterium Yellowstone A-Prime).